Consider the following 319-residue polypeptide: tRNA-cytidine(32) 2-sulfurtransferase (319 aa).

A PP-loop motif motif is present at residues 43–48 (SGGKDS). [4Fe-4S] cluster-binding residues include C118, C121, and C209. The tract at residues 272-297 (DLAFDSEKMPERFSDGSEEDESEIKI) is disordered. Residues 276-286 (DSEKMPERFSD) show a composition bias toward basic and acidic residues.

It belongs to the TtcA family. Homodimer. Mg(2+) is required as a cofactor. [4Fe-4S] cluster serves as cofactor.

The protein resides in the cytoplasm. It catalyses the reaction cytidine(32) in tRNA + S-sulfanyl-L-cysteinyl-[cysteine desulfurase] + AH2 + ATP = 2-thiocytidine(32) in tRNA + L-cysteinyl-[cysteine desulfurase] + A + AMP + diphosphate + H(+). Its pathway is tRNA modification. In terms of biological role, catalyzes the ATP-dependent 2-thiolation of cytidine in position 32 of tRNA, to form 2-thiocytidine (s(2)C32). The sulfur atoms are provided by the cysteine/cysteine desulfurase (IscS) system. This is tRNA-cytidine(32) 2-sulfurtransferase from Neisseria gonorrhoeae (strain ATCC 700825 / FA 1090).